Reading from the N-terminus, the 245-residue chain is Uridylate kinase (245 aa).

Position 18–21 (18–21 (KLSG)) interacts with ATP. Gly-60 is a binding site for UMP. 2 residues coordinate ATP: Gly-61 and Arg-65. Residues Asp-80 and 141–148 (TGNPFFTT) contribute to the UMP site. Residues Thr-168, Tyr-174, and Asp-177 each contribute to the ATP site.

The protein belongs to the UMP kinase family. As to quaternary structure, homohexamer.

It is found in the cytoplasm. It carries out the reaction UMP + ATP = UDP + ADP. Its pathway is pyrimidine metabolism; CTP biosynthesis via de novo pathway; UDP from UMP (UMPK route): step 1/1. With respect to regulation, inhibited by UTP. In terms of biological role, catalyzes the reversible phosphorylation of UMP to UDP. The polypeptide is Uridylate kinase (Pseudomonas aeruginosa (strain UCBPP-PA14)).